Consider the following 5193-residue polypeptide: Usherin (5193 aa).

An N-terminal signal peptide occupies residues 1–34 (MHYLALSPGFLCYTIKTLILAYLASVLVLAASQG). Residues 35-5033 (VFPRLENVGA…KSTEFYSELW (4999 aa)) are Extracellular-facing. N-linked (GlcNAc...) asparagine glycosylation is found at asparagine 230, asparagine 258, asparagine 274, asparagine 358, asparagine 415, asparagine 448, and asparagine 469. The 247-residue stretch at 268 to 514 (QDFRLYNVSL…AVDEIIVSGR (247 aa)) folds into the Laminin N-terminal domain. Intrachain disulfides connect cysteine 515–cysteine 524, cysteine 517–cysteine 533, cysteine 535–cysteine 546, cysteine 549–cysteine 569, cysteine 572–cysteine 581, cysteine 574–cysteine 602, cysteine 605–cysteine 614, cysteine 617–cysteine 635, cysteine 638–cysteine 652, cysteine 640–cysteine 659, cysteine 661–cysteine 670, cysteine 673–cysteine 688, cysteine 691–cysteine 705, cysteine 693–cysteine 712, cysteine 714–cysteine 723, cysteine 726–cysteine 741, cysteine 744–cysteine 756, cysteine 746–cysteine 763, cysteine 765–cysteine 774, cysteine 777–cysteine 789, cysteine 792–cysteine 805, cysteine 794–cysteine 812, cysteine 814–cysteine 823, and cysteine 826–cysteine 846. Laminin EGF-like domains follow at residues 515–571 (CQCH…NCKP), 572–637 (CQCH…ACKL), 638–690 (CDCN…GCRP), 691–743 (CNCN…GCEP), 744–791 (CQCN…ACEV), 792–848 (CDCS…NCEK), 853–896 (NGSL…GCQA), 897–947 (CDCD…GCLP), 948–998 (CLCH…RCRP), and 999–1049 (CHCH…GCSK). Asparagine 647 carries an N-linked (GlcNAc...) asparagine glycan. N-linked (GlcNAc...) asparagine glycosylation is found at asparagine 836 and asparagine 853. 14 disulfides stabilise this stretch: cysteine 867–cysteine 876, cysteine 879–cysteine 894, cysteine 897–cysteine 910, cysteine 899–cysteine 917, cysteine 919–cysteine 928, cysteine 931–cysteine 945, cysteine 948–cysteine 960, cysteine 950–cysteine 967, cysteine 969–cysteine 979, cysteine 982–cysteine 996, cysteine 999–cysteine 1011, cysteine 1001–cysteine 1018, cysteine 1020–cysteine 1029, and cysteine 1032–cysteine 1047. N-linked (GlcNAc...) asparagine glycosylation is present at asparagine 885. A glycan (N-linked (GlcNAc...) asparagine) is linked at asparagine 941. Asparagine 1008 carries an N-linked (GlcNAc...) asparagine glycan. 5 consecutive Fibronectin type-III domains span residues 1055–1143 (PPPR…TKPE), 1147–1241 (GHLN…APPQ), 1242–1357 (TQGP…SVPV), 1358–1462 (FMAP…AAPA), and 1463–1566 (QLRP…LQLK). N-linked (GlcNAc...) asparagine glycosylation is found at asparagine 1068, asparagine 1089, asparagine 1150, asparagine 1171, and asparagine 1222. Residues asparagine 1382, asparagine 1473, and asparagine 1626 are each glycosylated (N-linked (GlcNAc...) asparagine). Laminin G-like domains are found at residues 1511–1700 (TKGT…WEGC) and 1705–1882 (EEGV…QDGC). Residues cysteine 1663 and cysteine 1700 are joined by a disulfide bond. Asparagine 1770 carries an N-linked (GlcNAc...) asparagine glycan. Fibronectin type-III domains lie at 1847-1946 (EPGF…TAPQ), 1948-2045 (VPTP…TPQE), 2046-2132 (APQE…TAQL), 2133-2234 (PPEQ…IPEG), 2235-2321 (VPAP…APPE), 2322-2421 (GVVN…SVEM), 2422-2525 (PPGA…DKPG), 2526-2613 (PIDA…TLPG), 2617-2713 (GIPS…TRPC), 2717-2810 (GVQP…THPA), 2811-2914 (PPQE…TLAG), 2918-3009 (RGAT…MWEE), and 3013-3103 (GMLP…TPSD). Cysteine 1853 and cysteine 1882 are joined by a disulfide. N-linked (GlcNAc...) asparagine glycosylation occurs at asparagine 1894. The disordered stretch occupies residues 1931-1955 (VSSDWSRGRTLGTAPQSVPTPSRAQ). A compositionally biased stretch (polar residues) spans 1943–1955 (TAPQSVPTPSRAQ). Asparagine 1958, asparagine 2095, asparagine 2121, asparagine 2177, asparagine 2186, asparagine 2249, asparagine 2276, asparagine 2313, asparagine 2368, and asparagine 2404 each carry an N-linked (GlcNAc...) asparagine glycan. N-linked (GlcNAc...) asparagine glycans are attached at residues asparagine 2575, asparagine 2647, asparagine 2701, asparagine 2761, and asparagine 2779. N-linked (GlcNAc...) asparagine glycosylation is found at asparagine 2928, asparagine 2998, asparagine 3023, asparagine 3090, asparagine 3208, asparagine 3322, and asparagine 3411. 17 Fibronectin type-III domains span residues 3395–3489 (CPAT…TRED), 3490–3580 (VPEG…TTQR), 3581–3671 (SPEN…TLQA), 3672–3766 (APQG…TPED), 3769–3857 (PPCN…TLEA), 3858–3955 (APVG…TLEA), 3956–4059 (PPRG…SAPS), 4060–4148 (GLMN…APPD), 4149–4256 (TQMA…APPD), 4257–4346 (GLSP…TPEV), 4347–4437 (PPSE…APPE), 4438–4522 (NMDP…TSPS), 4523–4625 (APSG…VPPL), 4628–4725 (PAPH…TGPA), 4726–4818 (PPEG…THPA), 4819–4921 (PPSG…TKKE), and 4922–5005 (MPQY…YDAA). N-linked (GlcNAc...) asparagine glycans are attached at residues asparagine 3589, asparagine 3645, asparagine 3686, asparagine 3712, asparagine 3723, and asparagine 3772. N-linked (GlcNAc...) asparagine glycosylation is found at asparagine 3976, asparagine 4063, asparagine 4194, asparagine 4218, asparagine 4304, asparagine 4340, asparagine 4365, and asparagine 4410. Residues asparagine 4556, asparagine 4575, asparagine 4683, asparagine 4716, asparagine 4746, asparagine 4756, asparagine 4765, asparagine 4915, and asparagine 4934 are each glycosylated (N-linked (GlcNAc...) asparagine). Residues 5034–5054 (FIMVMAVVGLILLAIFLSLIL) traverse the membrane as a helical segment. The Cytoplasmic segment spans residues 5055 to 5193 (QRKIHKEPCI…EHTAFTDTHL (139 aa)). The short motif at 5191–5193 (THL) is the PDZ-binding element.

Interacts with collagen IV and fibronectin via its laminin EGF-like domains. Interaction with collagen may be required for stable integration into the basement membrane. Interacts with NINL. Interacts with USH1C. Component of USH2 complex, composed of ADGRV1, PDZD7, USH2A and WHRN. Interacts with ADGRV1/MASS1 (via N-terminal PDZ domain). Interacts (via the cytoplasmic region) with WHRN. Interacts (via the cytoplasmic region) with PDZD7. Interacts (via the cytoplasmic region) with VEZT and MYO7A (via MyTH4-FERM domains); the interaction associates VEZT with the USH2 complex at the stereocilia base. In terms of tissue distribution, present in the testis, epididymis, oviduct, spleen, submaxillary gland, and small and large intestines. Not detected in the brain, skin, lung, skeletal muscle, cardiac muscle, liver or kidney. Expressed in smooth muscle of the colon and the epididymis. Also present in select vascular basement membranes. In the cochlea, it is present in virtually every basement membrane. It is particularly high in the strial capillary basement membranes (SCBMs). In the retina, it is again expressed in all of the basement membranes. It is also very prevalent in the lens capsule and the Bruch's layer between the retinal pigment epithelium and the choroid layer, which is very rich in basement membranes. In neonates in it is widely expressed in the basement membranes of the cochlea. Present in the synaptic terminals of retinal photoreceptors (at protein level).

It is found in the cell projection. Its subcellular location is the stereocilium membrane. The protein localises to the photoreceptor inner segment. It localises to the secreted. In terms of biological role, involved in hearing and vision as member of the USH2 complex. In the inner ear, required for the maintenance of hair bundle ankle formation, which connects growing stereocilia in developing cochlear hair cells. In retina photoreceptors, the USH2 complex is required for the maintenance of periciliary membrane complex that seems to play a role in regulating intracellular protein transport. This chain is Usherin (Ush2A), found in Mus musculus (Mouse).